The chain runs to 179 residues: uncharacterized protein (179 aa).

This is an uncharacterized protein from Mushroom bacilliform virus (isolate Australia/AUS LF-1) (MBV).